A 214-amino-acid chain; its full sequence is Imidazole glycerol phosphate synthase subunit HisH (214 aa).

The 213-residue stretch at Arg2–Pro214 folds into the Glutamine amidotransferase type-1 domain. Residue Cys88 is the Nucleophile of the active site. Catalysis depends on residues His194 and Glu196.

In terms of assembly, heterodimer of HisH and HisF.

It localises to the cytoplasm. The catalysed reaction is 5-[(5-phospho-1-deoxy-D-ribulos-1-ylimino)methylamino]-1-(5-phospho-beta-D-ribosyl)imidazole-4-carboxamide + L-glutamine = D-erythro-1-(imidazol-4-yl)glycerol 3-phosphate + 5-amino-1-(5-phospho-beta-D-ribosyl)imidazole-4-carboxamide + L-glutamate + H(+). The enzyme catalyses L-glutamine + H2O = L-glutamate + NH4(+). The protein operates within amino-acid biosynthesis; L-histidine biosynthesis; L-histidine from 5-phospho-alpha-D-ribose 1-diphosphate: step 5/9. In terms of biological role, IGPS catalyzes the conversion of PRFAR and glutamine to IGP, AICAR and glutamate. The HisH subunit catalyzes the hydrolysis of glutamine to glutamate and ammonia as part of the synthesis of IGP and AICAR. The resulting ammonia molecule is channeled to the active site of HisF. This is Imidazole glycerol phosphate synthase subunit HisH from Rhodospirillum rubrum (strain ATCC 11170 / ATH 1.1.1 / DSM 467 / LMG 4362 / NCIMB 8255 / S1).